A 185-amino-acid polypeptide reads, in one-letter code: Ribosome-recycling factor (185 aa).

Belongs to the RRF family.

It is found in the cytoplasm. Functionally, responsible for the release of ribosomes from messenger RNA at the termination of protein biosynthesis. May increase the efficiency of translation by recycling ribosomes from one round of translation to another. This Halorhodospira halophila (strain DSM 244 / SL1) (Ectothiorhodospira halophila (strain DSM 244 / SL1)) protein is Ribosome-recycling factor.